The chain runs to 340 residues: Fructose-1,6-bisphosphatase class 1 (340 aa).

The Mg(2+) site is built by Glu-107, Asp-126, Leu-128, and Asp-129. Position 215 (Asn-215) interacts with substrate. Mg(2+) is bound at residue Glu-287.

The protein belongs to the FBPase class 1 family. In terms of assembly, homotetramer. Requires Mg(2+) as cofactor.

Its subcellular location is the cytoplasm. It carries out the reaction beta-D-fructose 1,6-bisphosphate + H2O = beta-D-fructose 6-phosphate + phosphate. Its pathway is carbohydrate biosynthesis; gluconeogenesis. The chain is Fructose-1,6-bisphosphatase class 1 from Brucella anthropi (strain ATCC 49188 / DSM 6882 / CCUG 24695 / JCM 21032 / LMG 3331 / NBRC 15819 / NCTC 12168 / Alc 37) (Ochrobactrum anthropi).